The chain runs to 275 residues: Vitamin B12-binding protein (275 aa).

The signal sequence occupies residues 1–19; the sequence is MMNKICLYLPLFFSSLTMA. In terms of domain architecture, Fe/B12 periplasmic-binding spans 25-272; it reads RVISLAPHAT…EVCEHFESVK (248 aa). A disulfide bridge links C185 with C265.

This sequence belongs to the BtuF family. The complex is composed of two ATP-binding proteins (BtuD), two transmembrane proteins (BtuC) and a solute-binding protein (BtuF).

It is found in the periplasm. Part of the ABC transporter complex BtuCDF involved in vitamin B12 import. Binds vitamin B12 and delivers it to the periplasmic surface of BtuC. The sequence is that of Vitamin B12-binding protein from Vibrio parahaemolyticus serotype O3:K6 (strain RIMD 2210633).